The chain runs to 89 residues: Small ribosomal subunit protein uS14 (89 aa).

This sequence belongs to the universal ribosomal protein uS14 family. Part of the 30S ribosomal subunit. Contacts proteins S3 and S10.

Binds 16S rRNA, required for the assembly of 30S particles and may also be responsible for determining the conformation of the 16S rRNA at the A site. The polypeptide is Small ribosomal subunit protein uS14 (Chlorobium phaeobacteroides (strain BS1)).